The following is a 304-amino-acid chain: Ribonuclease Z (304 aa).

Residues His63, His65, Asp67, His68, His143, Asp213, and His271 each coordinate Zn(2+). Asp67 (proton acceptor) is an active-site residue.

Belongs to the RNase Z family. Homodimer. Zn(2+) serves as cofactor.

It carries out the reaction Endonucleolytic cleavage of RNA, removing extra 3' nucleotides from tRNA precursor, generating 3' termini of tRNAs. A 3'-hydroxy group is left at the tRNA terminus and a 5'-phosphoryl group is left at the trailer molecule.. In terms of biological role, zinc phosphodiesterase, which displays some tRNA 3'-processing endonuclease activity. Probably involved in tRNA maturation, by removing a 3'-trailer from precursor tRNA. The protein is Ribonuclease Z of Porphyromonas gingivalis (strain ATCC BAA-308 / W83).